Consider the following 257-residue polypeptide: Protein YIPF5 (257 aa).

Residues 1–124 (MSGFDNLNSG…RASDGSIMNE (124 aa)) lie on the Cytoplasmic side of the membrane. Positions 75-106 (PPTPQTFYGDSFEEEPPLLEELGINFDHIWQK) are interaction with Sec23. Residues 125–145 (TDLAGPVVFCLAFGATLLLAG) traverse the membrane as a helical segment. Position 146 (Lys-146) is a topological domain, lumenal. Residues 147–167 (IQFGYVYGISAIGCLGMFCLL) form a helical membrane-spanning segment. Topologically, residues 168 to 173 (NLMSMT) are cytoplasmic. The chain crosses the membrane as a helical span at residues 174–194 (GVSFGCVASVLGYCLLPMILL). Residues 195–196 (SS) are Lumenal-facing. A helical transmembrane segment spans residues 197–217 (FAVVFSLQGMVGILLTATIIG). At 218–236 (WCSFSASKIFISALAMDGQ) the chain is on the cytoplasmic side. A helical membrane pass occupies residues 237-257 (QLLVAYPCALLYGVFALISVF).

Belongs to the YIP1 family. In terms of assembly, interacts with the COPII coat components Sec23 (SEC23A and/or SEC23B) and Sec24 (SEC24A and/or SEC24B). Interacts with YIF1A. May interact with RAB1A. Interacts with YIPF3 and YIPF4.

Its subcellular location is the endoplasmic reticulum membrane. The protein resides in the golgi apparatus. It localises to the cis-Golgi network membrane. It is found in the cytoplasmic vesicle. The protein localises to the COPII-coated vesicle. Its function is as follows. Plays a role in transport between endoplasmic reticulum and Golgi. In pancreatic beta cells, required to transport proinsulin from endoplasmic reticulum into the Golgi. This chain is Protein YIPF5, found in Rattus norvegicus (Rat).